We begin with the raw amino-acid sequence, 788 residues long: MSSHTVSTSLAVATLGTPRIGPRRELKSALESFWAGKSTEADLLKVAAALRAANWARQSARGVSVIPSNDFSLYDQVLDTSVMVGAIPEIYGWRGGPVSLATYFAMARGTQAEIAGHGCANGHHHGDSTPQGVPAQEMTKWFDTNYHYMVPEFSAGQSFQLASLKPLEEYREAKALGYDTRPVLLGPVTYLKLGKSADARLDVLSLLPKLVPVYIEILGRLAAAGAKWVQLDEPALVLDLDDRERLAFRDAYGQIARELPHLDIMLTTYFGGLGDNLDTALALPIAGLHLDLVRAPKQINAVIAKGPKDLVLSLGVVDGRNIWRADLPDLLDRVEPIVQQRGAERVQLAPSCSLLHVPVDLELETGLDPDLKSWLSFSLQKMGELSTLSGALSGDRAAVQDQLSASAKAAATRRKSPKVHDMAVSSRAAAVTPAMTQRNSGFAARATLQHQRLQLPAFPTTTIGSFPQTAQIRQARAAHAKGAISDADYNTFLRGETARAIQWQEKVGLDVLVHGEFERNDMVQYFGEQLSGFAFTKEGWVQSYGSRCVRPPILFGDVSRPKPMTVGWWKYAQSLTGRPMKGMLTGPVTILNWSFVRDDVPRSTACLQIALAIRDEVGDLEQAGATMIQIDEAALREGLPLRRSEWKGYLDWAVECFRLCSSGVKDETQIHTHMCYSEFNDIIDAIAAMDADVISIETSRSKMELLDAFKTYKYPNEIGPGVYDIHSPRVPSVEEMTTLLQLARQRLSDGQLWVNPDCGLKTRGWDEVQGALVNMVEAARQIRQVSAG.

Residues 24-27 (RELK) and lysine 140 contribute to the 5-methyltetrahydropteroyltri-L-glutamate site. Residues 463-465 (IGS) and glutamate 516 contribute to the L-homocysteine site. L-methionine contacts are provided by residues 463 to 465 (IGS) and glutamate 516. 5-methyltetrahydropteroyltri-L-glutamate is bound by residues 547–548 (RC) and tryptophan 593. Aspartate 631 is a binding site for L-homocysteine. Aspartate 631 provides a ligand contact to L-methionine. A 5-methyltetrahydropteroyltri-L-glutamate-binding site is contributed by glutamate 637. Residues histidine 673, cysteine 675, and glutamate 697 each coordinate Zn(2+). The active-site Proton donor is histidine 726. Cysteine 758 is a Zn(2+) binding site.

It belongs to the vitamin-B12 independent methionine synthase family. Requires Zn(2+) as cofactor.

The catalysed reaction is 5-methyltetrahydropteroyltri-L-glutamate + L-homocysteine = tetrahydropteroyltri-L-glutamate + L-methionine. Its pathway is amino-acid biosynthesis; L-methionine biosynthesis via de novo pathway; L-methionine from L-homocysteine (MetE route): step 1/1. Catalyzes the transfer of a methyl group from 5-methyltetrahydrofolate to homocysteine resulting in methionine formation. In Rhodopseudomonas palustris (strain TIE-1), this protein is 5-methyltetrahydropteroyltriglutamate--homocysteine methyltransferase.